The primary structure comprises 207 residues: Outer-membrane lipoprotein carrier protein (207 aa).

The first 21 residues, 1 to 21 (MRLIRMLLLPVLAVTTLSAHA), serve as a signal peptide directing secretion.

It belongs to the LolA family. In terms of assembly, monomer.

The protein localises to the periplasm. Its function is as follows. Participates in the translocation of lipoproteins from the inner membrane to the outer membrane. Only forms a complex with a lipoprotein if the residue after the N-terminal Cys is not an aspartate (The Asp acts as a targeting signal to indicate that the lipoprotein should stay in the inner membrane). The sequence is that of Outer-membrane lipoprotein carrier protein from Pseudomonas fluorescens (strain ATCC BAA-477 / NRRL B-23932 / Pf-5).